The sequence spans 213 residues: uncharacterized protein (213 aa).

Residues Gly-53, Glu-74, and Asp-96 each contribute to the S-adenosyl-L-methionine site.

The protein belongs to the methyltransferase superfamily. YrrT family.

Its function is as follows. Could be a S-adenosyl-L-methionine-dependent methyltransferase. This is an uncharacterized protein from Oceanobacillus iheyensis (strain DSM 14371 / CIP 107618 / JCM 11309 / KCTC 3954 / HTE831).